A 402-amino-acid polypeptide reads, in one-letter code: UPF0261 protein BP1203 (402 aa).

It belongs to the UPF0261 family.

The protein is UPF0261 protein BP1203 of Bordetella pertussis (strain Tohama I / ATCC BAA-589 / NCTC 13251).